A 201-amino-acid polypeptide reads, in one-letter code: Peptidyl-tRNA hydrolase (201 aa).

Y17 lines the tRNA pocket. H22 acts as the Proton acceptor in catalysis. Residues F76, N78, and N124 each coordinate tRNA.

Belongs to the PTH family. Monomer.

It localises to the cytoplasm. The catalysed reaction is an N-acyl-L-alpha-aminoacyl-tRNA + H2O = an N-acyl-L-amino acid + a tRNA + H(+). In terms of biological role, hydrolyzes ribosome-free peptidyl-tRNAs (with 1 or more amino acids incorporated), which drop off the ribosome during protein synthesis, or as a result of ribosome stalling. Catalyzes the release of premature peptidyl moieties from peptidyl-tRNA molecules trapped in stalled 50S ribosomal subunits, and thus maintains levels of free tRNAs and 50S ribosomes. This is Peptidyl-tRNA hydrolase from Nitratidesulfovibrio vulgaris (strain ATCC 29579 / DSM 644 / CCUG 34227 / NCIMB 8303 / VKM B-1760 / Hildenborough) (Desulfovibrio vulgaris).